The primary structure comprises 428 residues: 3-phosphoshikimate 1-carboxyvinyltransferase (428 aa).

3-phosphoshikimate-binding residues include K21, S22, and R26. K21 lines the phosphoenolpyruvate pocket. Phosphoenolpyruvate is bound by residues G91 and R119. Residues S164, Q166, D311, and K338 each coordinate 3-phosphoshikimate. A phosphoenolpyruvate-binding site is contributed by Q166. The active-site Proton acceptor is D311. Residues R342 and R383 each coordinate phosphoenolpyruvate.

Belongs to the EPSP synthase family. As to quaternary structure, monomer.

The protein resides in the cytoplasm. It catalyses the reaction 3-phosphoshikimate + phosphoenolpyruvate = 5-O-(1-carboxyvinyl)-3-phosphoshikimate + phosphate. The protein operates within metabolic intermediate biosynthesis; chorismate biosynthesis; chorismate from D-erythrose 4-phosphate and phosphoenolpyruvate: step 6/7. Its function is as follows. Catalyzes the transfer of the enolpyruvyl moiety of phosphoenolpyruvate (PEP) to the 5-hydroxyl of shikimate-3-phosphate (S3P) to produce enolpyruvyl shikimate-3-phosphate and inorganic phosphate. The protein is 3-phosphoshikimate 1-carboxyvinyltransferase of Campylobacter concisus (strain 13826).